We begin with the raw amino-acid sequence, 606 residues long: MSKSLEWDNLGFSLLPWIRTGLDVMGFETMTPVQASTIPMLAGNKDVVVDSVTGSGKTAAFVIPVLEKVVKEEANTSKFKKAHFHSLIIAPTRELSRQIESVVLSFLEHYPSDLFPIKCQLLVGTNEATVRDDVSNFLRNRPQILIGTPGRVLDFLQMPAVKTSACSMVVMDEADRLLDMSFIKDTEKILRLLPKQRRTGLFSATMRSAGSDIFKTGLRNPVRITVNSKNQAPSSLKLNYCVVNPAEKLQLLVSILNNYKFKKCIVYFPTCVSVSYFYSFIQYLGKRNILVNEVEIFSLHGKLQTSARTKTLTAFTDSLSNSVLFTTDVAARGIDIPDVDLVIQLDPPTNTDMFMHRCGRTGRANRVGKAITFLNEGREEDFIPFMQVKNVELEELDLEVKGITTNFYEDFRNWILEDRDRFDKGVKAYVAFIKYYSNHSATSIFRLQSLDYVGIAKLYGLFRLPRMPEITKYLATEKQEGIFPGNWLVDPPVNMDEYKYKDKKREKERQETLKNISLINDKKKLKSELKKKNLAWSDKTLTKERKLERKEKMSLKRKAIEEELKAEELDENAEEERIKEDWKEIVLQNKRKKVSSKAIQGNFDDL.

The short motif at 7–35 is the Q motif element; the sequence is WDNLGFSLLPWIRTGLDVMGFETMTPVQA. The region spanning 38-224 is the Helicase ATP-binding domain; the sequence is IPMLAGNKDV…KTGLRNPVRI (187 aa). 51 to 58 lines the ATP pocket; the sequence is SVTGSGKT. The short motif at 172–175 is the DEAD box element; it reads DEAD. One can recognise a Helicase C-terminal domain in the interval 248–404; the sequence is KLQLLVSILN…ELDLEVKGIT (157 aa). Position 254 is a phosphoserine (S254). Residues 539–582 adopt a coiled-coil conformation; it reads KTLTKERKLERKEKMSLKRKAIEEELKAEELDENAEEERIKEDW.

The protein belongs to the DEAD box helicase family. DDX55/SPB4 subfamily. As to quaternary structure, component of pre-60S ribosomal complexes.

It is found in the nucleus. It localises to the nucleolus. The catalysed reaction is ATP + H2O = ADP + phosphate + H(+). Functionally, ATP-binding RNA helicase involved in the biogenesis of 60S ribosomal subunits. Binds 90S pre-ribosomal particles and dissociates from pre-60S ribosomal particles after processing of 27SB pre-rRNA. Required for the normal formation of 18S rRNA through the processing of pre-rRNAs at sites A0, A1 and A2, and the normal formation of 25S and 5.8S rRNAs through the processing of pre-rRNAs at sites C1 and C2. Also required for recruitment of NOG2 to pre-ribosomes. The sequence is that of ATP-dependent rRNA helicase SPB4 from Saccharomyces cerevisiae (strain ATCC 204508 / S288c) (Baker's yeast).